The chain runs to 132 residues: Profilin (132 aa).

Belongs to the profilin family. Occurs in many kinds of cells as a complex with monomeric actin in a 1:1 ratio.

Its subcellular location is the cytoplasm. It localises to the cytoskeleton. Its function is as follows. Binds to actin and affects the structure of the cytoskeleton. At high concentrations, profilin prevents the polymerization of actin, whereas it enhances it at low concentrations. By binding to PIP2, it inhibits the formation of IP3 and DG. This chain is Profilin, found in Naegleria pringsheimi (Amoeba).